Reading from the N-terminus, the 158-residue chain is Eukaryotic translation initiation factor 5A-1 (158 aa).

A compositionally biased stretch (basic and acidic residues) spans 1–10 (MSDEEHHFES). The segment at 1-21 (MSDEEHHFESSDAGASKTYPQ) is disordered. Residue serine 2 is modified to Phosphoserine. Lysine 51 carries the hypusine modification.

The protein belongs to the eIF-5A family. Lys-51 undergoes hypusination, a unique post-translational modification that consists in the addition of a butylamino group from spermidine to lysine side chain, leading to the formation of the unusual amino acid hypusine. eIF-5As are the only known proteins to undergo this modification, which is essential for their function. As to expression, expressed in leaf vasculature and inflorescence stems. Present in xylem tissue but not in phloem, and in developing vessel members, but not in mature vessels members. Detected in anthers.

Functionally, translation factor that promotes translation elongation and termination, particularly upon ribosome stalling at specific amino acid sequence contexts. Binds between the exit (E) and peptidyl (P) site of the ribosome and promotes rescue of stalled ribosome: specifically required for efficient translation of polyproline-containing peptides as well as other motifs that stall the ribosome. Acts as a ribosome quality control (RQC) cofactor by joining the RQC complex to facilitate peptidyl transfer during CAT tailing step. Involved in xylogenesis. This is Eukaryotic translation initiation factor 5A-1 (ELF5A-1) from Arabidopsis thaliana (Mouse-ear cress).